The sequence spans 301 residues: Ubiquinone biosynthesis protein COQ4, mitochondrial (301 aa).

The N-terminal 46 residues, 1–46 (MEVTLKRSAALARQTTPLLRPLRPVATYPSNNNNNNNPTPQQRRPY), are a transit peptide targeting the mitochondrion. Residues 14-48 (QTTPLLRPLRPVATYPSNNNNNNNPTPQQRRPYSL) are disordered. The segment covering 38-48 (PTPQQRRPYSL) has biased composition (polar residues). Residues His-185, Asp-186, His-189, and Glu-201 each contribute to the Zn(2+) site.

It belongs to the COQ4 family. As to quaternary structure, component of a multi-subunit COQ enzyme complex, composed of at least COQ3, COQ4, COQ5, COQ6, COQ7 and COQ9. Requires Zn(2+) as cofactor.

It localises to the mitochondrion inner membrane. It catalyses the reaction a 4-hydroxy-3-methoxy-5-(all-trans-polyprenyl)benzoate + H(+) = a 2-methoxy-6-(all-trans-polyprenyl)phenol + CO2. Its pathway is cofactor biosynthesis; ubiquinone biosynthesis. Lyase that catalyzes the C1-decarboxylation of 4-hydroxy-3-methoxy-5-(all-trans-polyprenyl)benzoic acid into 2-methoxy-6-(all-trans-polyprenyl)phenol during ubiquinone biosynthesis. In Podospora anserina (strain S / ATCC MYA-4624 / DSM 980 / FGSC 10383) (Pleurage anserina), this protein is Ubiquinone biosynthesis protein COQ4, mitochondrial.